Reading from the N-terminus, the 154-residue chain is Jupiter microtubule associated homolog 1 (154 aa).

At M1 the chain carries N-acetylmethionine. Residues M1–R19 show a composition bias toward polar residues. A disordered region spans residues M1–G154. N-acetylthreonine; in Hematological and neurological expressed 1 protein, N-terminally processed is present on T2. Phosphoserine is present on residues S28 and S31. A Phosphothreonine modification is found at T54. A phosphoserine mark is found at S71, S87, S88, and S92. Residues S79–S91 show a composition bias toward polar residues. Residues L96–V108 are compositionally biased toward basic and acidic residues. Positions P125 to V138 are enriched in pro residues. At S131 the chain carries Phosphoserine. K148 is modified (N6-acetyllysine).

The protein belongs to the JUPITER family. Interacts with the complex composed, at least, of APC, CTNNB1 and GSK3B; the interaction takes place with the inactive form of GSK3B (phosphorylated at 'Ser-9'). In terms of tissue distribution, expressed in yolk sac, fetal brain, brain, spleen and bone marrow.

It localises to the nucleus. The protein resides in the cytoplasm. Its function is as follows. Modulates negatively AKT-mediated GSK3B signaling. Induces CTNNB1 'Ser-33' phosphorylation and degradation through the suppression of the inhibitory 'Ser-9' phosphorylation of GSK3B, which represses the function of the APC:CTNNB1:GSK3B complex and the interaction with CDH1/E-cadherin in adherent junctions. Plays a role in the regulation of cell cycle and cell adhesion. Has an inhibitory role on AR-signaling pathway through the induction of receptor proteasomal degradation. The chain is Jupiter microtubule associated homolog 1 from Mus musculus (Mouse).